A 369-amino-acid polypeptide reads, in one-letter code: Large ribosomal subunit protein uL4 (369 aa).

Threonine 2 is subject to N-acetylthreonine.

It belongs to the universal ribosomal protein uL4 family.

The polypeptide is Large ribosomal subunit protein uL4 (rpl4) (Dictyostelium discoideum (Social amoeba)).